A 265-amino-acid chain; its full sequence is Indole-3-glycerol phosphate synthase (265 aa).

It belongs to the TrpC family.

It carries out the reaction 1-(2-carboxyphenylamino)-1-deoxy-D-ribulose 5-phosphate + H(+) = (1S,2R)-1-C-(indol-3-yl)glycerol 3-phosphate + CO2 + H2O. Its pathway is amino-acid biosynthesis; L-tryptophan biosynthesis; L-tryptophan from chorismate: step 4/5. This Xanthomonas euvesicatoria pv. vesicatoria (strain 85-10) (Xanthomonas campestris pv. vesicatoria) protein is Indole-3-glycerol phosphate synthase.